We begin with the raw amino-acid sequence, 89 residues long: MSLNAETKAGIVEKYRRDPSDTGSPEVQVALLSARIDHLMGHFASHKKDHHSRRGLLKMVNQRRKLLDYLKSQDQQRYQDLVSSLGLRR.

The interval 1 to 24 is disordered; that stretch reads MSLNAETKAGIVEKYRRDPSDTGS. The segment covering 11–20 has biased composition (basic and acidic residues); that stretch reads IVEKYRRDPS.

The protein belongs to the universal ribosomal protein uS15 family. As to quaternary structure, part of the 30S ribosomal subunit. Forms a bridge to the 50S subunit in the 70S ribosome, contacting the 23S rRNA.

Functionally, one of the primary rRNA binding proteins, it binds directly to 16S rRNA where it helps nucleate assembly of the platform of the 30S subunit by binding and bridging several RNA helices of the 16S rRNA. Its function is as follows. Forms an intersubunit bridge (bridge B4) with the 23S rRNA of the 50S subunit in the ribosome. In Thioalkalivibrio sulfidiphilus (strain HL-EbGR7), this protein is Small ribosomal subunit protein uS15.